We begin with the raw amino-acid sequence, 421 residues long: Lipid II:glycine glycyltransferase (421 aa).

Belongs to the FemABX family. In terms of assembly, monomer.

It is found in the cytoplasm. It carries out the reaction beta-D-GlcNAc-(1-&gt;4)-Mur2Ac(oyl-L-Ala-D-isoglutaminyl-L-Lys-D-Ala-D-Ala)-di-trans,octa-cis-undecaprenyl diphosphate + glycyl-tRNA(Gly) = beta-D-GlcNAc-(1-&gt;4)-Mur2Ac(oyl-L-Ala-D-isoglutaminyl-L-Lys-(N(6)-Gly)-D-Ala-D-Ala)-di-trans,octa-cis-undecaprenyl diphosphate + tRNA(Gly) + H(+). Catalyzes the incorporation of the first glycine of the pentaglycine interpeptide bridge, which is characteristic of the S.aureus peptidoglycan. This glycine is added to the epsilon-amino group of the L-lysine of the membrane-bound lipid II intermediate (GlcNAc-(beta-1,4)-N-acetylmuramic acid(-L-Ala-D-iGln-L-Lys-D-Ala-D-Ala)-pyrophosphoryl-undecaprenol), using glycyl-tRNA(Gly) as donor, in a ribosome-independent mechanism. This Staphylococcus aureus (strain MSSA476) protein is Lipid II:glycine glycyltransferase (femX).